The sequence spans 153 residues: Large ribosomal subunit protein uL23m (153 aa).

The interval 110 to 153 (IFPEKDKKSKEGSVEEMHEKFMEDERQRQKPDPRRGGVTEWFGL) is disordered. Over residues 111 to 146 (FPEKDKKSKEGSVEEMHEKFMEDERQRQKPDPRRGG) the composition is skewed to basic and acidic residues.

It belongs to the universal ribosomal protein uL23 family. In terms of assembly, component of the mitochondrial ribosome large subunit (39S) which comprises a 16S rRNA and about 50 distinct proteins.

Its subcellular location is the mitochondrion. The protein is Large ribosomal subunit protein uL23m (mrpl23) of Danio rerio (Zebrafish).